The sequence spans 360 residues: GDSL esterase/lipase At1g58430 (360 aa).

The N-terminal stretch at 1 to 23 (MWTSKTISFTLFITTTLLGSCNA) is a signal peptide. N-linked (GlcNAc...) asparagine glycosylation occurs at N22. S42 acts as the Nucleophile in catalysis. Residues N104 and N326 are each glycosylated (N-linked (GlcNAc...) asparagine). Catalysis depends on residues D334 and H337.

It belongs to the 'GDSL' lipolytic enzyme family.

It is found in the secreted. This is GDSL esterase/lipase At1g58430 from Arabidopsis thaliana (Mouse-ear cress).